The primary structure comprises 282 residues: Pantothenate synthetase (282 aa).

Residue 29 to 36 participates in ATP binding; the sequence is MGFLHEGH. The Proton donor role is filled by His36. (R)-pantoate is bound at residue Gln60. Residue Gln60 participates in beta-alanine binding. Residue 146-149 participates in ATP binding; the sequence is GEKD. (R)-pantoate is bound at residue Gln152. Residues Ile175 and 183–186 contribute to the ATP site; that span reads KSSR.

This sequence belongs to the pantothenate synthetase family. Homodimer.

Its subcellular location is the cytoplasm. It catalyses the reaction (R)-pantoate + beta-alanine + ATP = (R)-pantothenate + AMP + diphosphate + H(+). The protein operates within cofactor biosynthesis; (R)-pantothenate biosynthesis; (R)-pantothenate from (R)-pantoate and beta-alanine: step 1/1. Its function is as follows. Catalyzes the condensation of pantoate with beta-alanine in an ATP-dependent reaction via a pantoyl-adenylate intermediate. This is Pantothenate synthetase from Clostridioides difficile (strain 630) (Peptoclostridium difficile).